Consider the following 441-residue polypeptide: 4-alpha-glucanotransferase (441 aa).

Ca(2+) is bound by residues D13, N15, D17, V19, and D21. D186 serves as the catalytic Nucleophile. E216 acts as the Proton donor in catalysis.

This sequence belongs to the glycosyl hydrolase 13 family. Monomer. Ca(2+) is required as a cofactor.

It is found in the cytoplasm. The enzyme catalyses Transfers a segment of a (1-&gt;4)-alpha-D-glucan to a new position in an acceptor, which may be glucose or a (1-&gt;4)-alpha-D-glucan.. The polypeptide is 4-alpha-glucanotransferase (mgtA) (Thermotoga maritima (strain ATCC 43589 / DSM 3109 / JCM 10099 / NBRC 100826 / MSB8)).